The chain runs to 68 residues: MKTQIVILIVAVLFLQLVSQSDAFLKGIIDTVSNWLGKRGLKNLDQYNDLFDGEISDADIKFLKDLMR.

The signal sequence occupies residues 1-23 (MKTQIVILIVAVLFLQLVSQSDA). At L36 the chain carries Leucine amide. A propeptide spanning residues 40-68 (GLKNLDQYNDLFDGEISDADIKFLKDLMR) is cleaved from the precursor.

It belongs to the non-disulfide-bridged peptide (NDBP) superfamily. Short antimicrobial peptide (group 4) family. In terms of tissue distribution, expressed by the venom gland.

It localises to the secreted. The protein localises to the target cell membrane. Its function is as follows. Amphipathic peptide that shows no antibacterial activity even at 50 uM but shows a low hemolytic activity against human erythrocytes. The sequence is that of Amphipathic peptide CT1 from Mesomexovis subcristatus (Scorpion).